The chain runs to 343 residues: Tetraacyldisaccharide 4'-kinase (343 aa).

Residue 51–58 (TVGGAGKT) participates in ATP binding.

The protein belongs to the LpxK family.

The enzyme catalyses a lipid A disaccharide + ATP = a lipid IVA + ADP + H(+). Its pathway is glycolipid biosynthesis; lipid IV(A) biosynthesis; lipid IV(A) from (3R)-3-hydroxytetradecanoyl-[acyl-carrier-protein] and UDP-N-acetyl-alpha-D-glucosamine: step 6/6. Functionally, transfers the gamma-phosphate of ATP to the 4'-position of a tetraacyldisaccharide 1-phosphate intermediate (termed DS-1-P) to form tetraacyldisaccharide 1,4'-bis-phosphate (lipid IVA). In Xanthobacter autotrophicus (strain ATCC BAA-1158 / Py2), this protein is Tetraacyldisaccharide 4'-kinase.